The chain runs to 276 residues: Large ribosomal subunit protein uL2 (276 aa).

The interval 224 to 276 (AMNPIDHPHGGGEGKTSGGRNPVTPWGVSTKGKKTRKKNKSSNKYIKRVSDKG) is disordered. The segment covering 254 to 270 (KGKKTRKKNKSSNKYIK) has biased composition (basic residues).

This sequence belongs to the universal ribosomal protein uL2 family. In terms of assembly, part of the 50S ribosomal subunit. Forms a bridge to the 30S subunit in the 70S ribosome.

Functionally, one of the primary rRNA binding proteins. Required for association of the 30S and 50S subunits to form the 70S ribosome, for tRNA binding and peptide bond formation. It has been suggested to have peptidyltransferase activity; this is somewhat controversial. Makes several contacts with the 16S rRNA in the 70S ribosome. The polypeptide is Large ribosomal subunit protein uL2 (Ehrlichia ruminantium (strain Gardel)).